The primary structure comprises 43 residues: METATLVAIFISGLLVSFTGYALYTAFGQPSQQLRDPFEEHGD.

The helical transmembrane segment at 7 to 27 (VAIFISGLLVSFTGYALYTAF) threads the bilayer.

The protein belongs to the PsbN family.

Its subcellular location is the plastid. It localises to the chloroplast thylakoid membrane. In terms of biological role, may play a role in photosystem I and II biogenesis. The polypeptide is Protein PsbN (Daucus carota (Wild carrot)).